The primary structure comprises 491 residues: Trigger factor (491 aa).

The PPIase FKBP-type domain occupies 173 to 260 (GDVAVVSFSG…LDELKGRELP (88 aa)). Positions 435-491 (MVDPASEDKPAKASKAKSSKAKAEKEPAAEGQAKAKPAAKTSKSKTKAAEKLITPID) are disordered. The span at 463–475 (AEGQAKAKPAAKT) shows a compositional bias: low complexity.

The protein belongs to the FKBP-type PPIase family. Tig subfamily.

The protein resides in the cytoplasm. The enzyme catalyses [protein]-peptidylproline (omega=180) = [protein]-peptidylproline (omega=0). In terms of biological role, involved in protein export. Acts as a chaperone by maintaining the newly synthesized protein in an open conformation. Functions as a peptidyl-prolyl cis-trans isomerase. This Synechococcus sp. (strain RCC307) protein is Trigger factor.